Reading from the N-terminus, the 507-residue chain is Probable Xaa-Pro aminopeptidase HCAG_02413 (507 aa).

Aspartate 283, aspartate 294, glutamate 431, and glutamate 469 together coordinate Mn(2+).

It belongs to the peptidase M24B family. The cofactor is Mn(2+).

It carries out the reaction Release of any N-terminal amino acid, including proline, that is linked to proline, even from a dipeptide or tripeptide.. In terms of biological role, catalyzes the removal of a penultimate prolyl residue from the N-termini of peptides. This chain is Probable Xaa-Pro aminopeptidase HCAG_02413, found in Ajellomyces capsulatus (strain NAm1 / WU24) (Darling's disease fungus).